The following is a 349-amino-acid chain: Phosphate acyltransferase (349 aa).

It belongs to the PlsX family. In terms of assembly, homodimer. Probably interacts with PlsY.

It localises to the cytoplasm. The catalysed reaction is a fatty acyl-[ACP] + phosphate = an acyl phosphate + holo-[ACP]. It functions in the pathway lipid metabolism; phospholipid metabolism. Catalyzes the reversible formation of acyl-phosphate (acyl-PO(4)) from acyl-[acyl-carrier-protein] (acyl-ACP). This enzyme utilizes acyl-ACP as fatty acyl donor, but not acyl-CoA. This chain is Phosphate acyltransferase, found in Albidiferax ferrireducens (strain ATCC BAA-621 / DSM 15236 / T118) (Rhodoferax ferrireducens).